The primary structure comprises 405 residues: Protein lin-11 (405 aa).

Residues Lys17 and Lys18 each participate in a glycyl lysine isopeptide (Lys-Gly) (interchain with G-Cter in SUMO) cross-link. LIM zinc-binding domains lie at 68–124 (CAAC…RRYS) and 127–187 (CAGC…TATK). Polar residues predominate over residues 189-205 (STPTSIHRPVSNGSECN). 2 disordered regions span residues 189 to 208 (STPTSIHRPVSNGSECNSDV) and 224 to 246 (GEGDCGKDNSDDSNSAKRRGPRT). Positions 241–300 (RRGPRTTIKAKQLETLKNAFAATPKPTRHIREQLAAETGLNMRVIQVWFQNRRSKERRMK) form a DNA-binding region, homeobox.

Expressed in ADL, AVJL, AIZL, RICL, RIF and AVG neurons.

The protein localises to the nucleus. Its function is as follows. Probable transcription factor which is required for asymmetric division of vulval blast cells. Involved in olfactory plasticity probably by regulating the expression of transcription factor mbr-1 in RIF neurons. Plays a role in the chemorepulsive response toward ascaroside pheromones mediated by the ADL sensory neurons, probably by regulating E-box motif 5'-CANNTG-3' containing target genes in the ADL neurons. Plays a role in the differentiation of the ADL sensory neurons. This chain is Protein lin-11 (lin-11), found in Caenorhabditis elegans.